Reading from the N-terminus, the 166-residue chain is Small ribosomal subunit protein uS5 (166 aa).

One can recognise an S5 DRBM domain in the interval 10–73 (QIEKLISLNR…TSARKNLRFV (64 aa)).

This sequence belongs to the universal ribosomal protein uS5 family. In terms of assembly, part of the 30S ribosomal subunit. Contacts proteins S4 and S8.

Functionally, with S4 and S12 plays an important role in translational accuracy. Its function is as follows. Located at the back of the 30S subunit body where it stabilizes the conformation of the head with respect to the body. The protein is Small ribosomal subunit protein uS5 of Borrelia garinii subsp. bavariensis (strain ATCC BAA-2496 / DSM 23469 / PBi) (Borreliella bavariensis).